The primary structure comprises 78 residues: Acyl carrier protein (78 aa).

The region spanning 2–77 (SDVLERVSKI…DAVKFISEKV (76 aa)) is the Carrier domain. At Ser-37 the chain carries O-(pantetheine 4'-phosphoryl)serine.

This sequence belongs to the acyl carrier protein (ACP) family. 4'-phosphopantetheine is transferred from CoA to a specific serine of apo-ACP by AcpS. This modification is essential for activity because fatty acids are bound in thioester linkage to the sulfhydryl of the prosthetic group.

Its subcellular location is the cytoplasm. Its pathway is lipid metabolism; fatty acid biosynthesis. Carrier of the growing fatty acid chain in fatty acid biosynthesis. This is Acyl carrier protein from Maricaulis maris (strain MCS10) (Caulobacter maris).